The sequence spans 607 residues: UvrABC system protein C (607 aa).

Residues 15–94 enclose the GIY-YIG domain; it reads ENPGVYLMKN…IKRHRPYFNV (80 aa). The region spanning 204-239 is the UVR domain; the sequence is DQVLKLLIRLMNEASARLDYETAALRRDQIASIKEV.

Belongs to the UvrC family. Interacts with UvrB in an incision complex.

The protein resides in the cytoplasm. The UvrABC repair system catalyzes the recognition and processing of DNA lesions. UvrC both incises the 5' and 3' sides of the lesion. The N-terminal half is responsible for the 3' incision and the C-terminal half is responsible for the 5' incision. This is UvrABC system protein C from Dehalococcoides mccartyi (strain CBDB1).